A 436-amino-acid polypeptide reads, in one-letter code: Trigger factor (436 aa).

Residues 163–248 form the PPIase FKBP-type domain; that stretch reads GDRATIDFEG…VKKIEAAHLP (86 aa).

It belongs to the FKBP-type PPIase family. Tig subfamily.

The protein resides in the cytoplasm. It carries out the reaction [protein]-peptidylproline (omega=180) = [protein]-peptidylproline (omega=0). Functionally, involved in protein export. Acts as a chaperone by maintaining the newly synthesized protein in an open conformation. Functions as a peptidyl-prolyl cis-trans isomerase. The sequence is that of Trigger factor from Polaromonas sp. (strain JS666 / ATCC BAA-500).